Reading from the N-terminus, the 119-residue chain is uncharacterized protein (119 aa).

Residues 1 to 30 form the signal peptide; that stretch reads MCPECFFLMLCFCGYCSSSSSSFRSSPVYG.

This is an uncharacterized protein from Escherichia coli (strain UTI89 / UPEC).